The sequence spans 367 residues: C-C chemokine receptor type 6 (367 aa).

Over 1-39 the chain is Extracellular; it reads MNSTESYFGTDDYDNTEYYSIPPDHGPCSLEEVRNFTKV. 2 N-linked (GlcNAc...) asparagine glycosylation sites follow: Asn-2 and Asn-35. A helical membrane pass occupies residues 40–66; the sequence is FVPIAYSLICVFGLLGNIMVVMTFAFY. Topologically, residues 67-75 are cytoplasmic; it reads KKARSMTDV. A helical membrane pass occupies residues 76-96; the sequence is YLLNMAITDILFVLTLPFWAV. The Extracellular segment spans residues 97–111; the sequence is THATNTWVFSDALCK. Cys-110 and Cys-189 are oxidised to a cystine. Residues 112–133 traverse the membrane as a helical segment; the sequence is LMKGTYAVNFNCGMLLLACISM. At 134–151 the chain is on the cytoplasmic side; that stretch reads DRYIAIVQATKSFRVRSR. Residues 152-172 traverse the membrane as a helical segment; it reads TLTHSKVICVAVWFISIIISS. Topologically, residues 173–203 are extracellular; it reads PTFIFNKKYELQDRDVCEPRYRSVSEPITWK. Residues 204-230 form a helical membrane-spanning segment; it reads LLGMGLELFFGFFTPLLFMVFCYLFII. Topologically, residues 231-246 are cytoplasmic; sequence KTLVQAQNSKRHRAIR. A helical membrane pass occupies residues 247–271; it reads VVIAVVLVFLACQIPHNMVLLVTAV. The Extracellular portion of the chain corresponds to 272–295; that stretch reads NTGKVGRSCSTEKVLAYTRNVAEV. A helical membrane pass occupies residues 296–313; the sequence is LAFLHCCLNPVLYAFIGQ. Residues 314–367 lie on the Cytoplasmic side of the membrane; it reads KFRNYFMKIMKDVWCMRRKNKMPGFLCARVYSESYISRQTSETVENDNASSFTM.

It belongs to the G-protein coupled receptor 1 family. Sperm. Mainly localized in the principal piece and neck region of the tail but is also found in the acrosomal region in a small percentage of sperm cells. Expressed in natural regulatory T cells (nTregs) and a subset of early thymocyte progenitor double-negative 1 (DN1) cells. Expressed in memory B cells. Expressed by IL17 producing helper T-cells (Th17), type 1 effector cells (Th1), type 2 effector cells (Th2) and regulatory T-cells (Treg) (at protein level). Expressed by Th17 cells in spleen, Peyers patches, and lamina propria of small and large intestine. Highly expressed in testis, lung, colon, and dendritic cells.

It localises to the cell membrane. The protein localises to the cell surface. In terms of biological role, receptor for the C-C type chemokine CCL20. Binds to CCL20 and subsequently transduces a signal by increasing the intracellular calcium ion levels. Although CCL20 is its major ligand it can also act as a receptor for non-chemokine ligands such as beta-defensins. Binds to defensin DEFB1 leading to increase in intracellular calcium ions and cAMP levels. Its binding to DEFB1 is essential for the function of DEFB1 in regulating sperm motility and bactericidal activity. Binds to defensins DEFB4 and DEFB4A/B and mediates their chemotactic effects. The ligand-receptor pair CCL20-CCR6 is responsible for the chemotaxis of dendritic cells (DC), effector/memory T-cells and B-cells and plays an important role at skin and mucosal surfaces under homeostatic and inflammatory conditions, as well as in pathology, including cancer and various autoimmune diseases. CCR6-mediated signals are essential for immune responses to microbes in the intestinal mucosa and in the modulation of inflammatory responses initiated by tissue insult and trauma. CCR6 is essential for the recruitment of both the pro-inflammatory IL17 producing helper T-cells (Th17) and the regulatory T-cells (Treg) to sites of inflammation. Required for the normal migration of Th17 cells in Peyers patches and other related tissue sites of the intestine and plays a role in regulating effector T-cell balance and distribution in inflamed intestine. Plays an important role in the coordination of early thymocyte precursor migration events important for normal subsequent thymocyte precursor development, but is not required for the formation of normal thymic natural regulatory T-cells (nTregs). Required for optimal differentiation of DN2 and DN3 thymocyte precursors. Essential for B-cell localization in the subepithelial dome of Peyers-patches and for efficient B-cell isotype switching to IgA in the Peyers-patches. Essential for appropriate anatomical distribution of memory B-cells in the spleen and for the secondary recall response of memory B-cells. Positively regulates sperm motility and chemotaxis via its binding to CCL20. The sequence is that of C-C chemokine receptor type 6 (Ccr6) from Mus musculus (Mouse).